The following is a 336-amino-acid chain: Coproporphyrin III ferrochelatase (336 aa).

Ser52 and Tyr116 together coordinate Fe-coproporphyrin III. Fe(2+) contacts are provided by His176 and Glu259.

Belongs to the ferrochelatase family.

It is found in the cytoplasm. The catalysed reaction is Fe-coproporphyrin III + 2 H(+) = coproporphyrin III + Fe(2+). It functions in the pathway porphyrin-containing compound metabolism; protoheme biosynthesis. In terms of biological role, involved in coproporphyrin-dependent heme b biosynthesis. Catalyzes the insertion of ferrous iron into coproporphyrin III to form Fe-coproporphyrin III. In Mycobacterium leprae (strain Br4923), this protein is Coproporphyrin III ferrochelatase.